A 140-amino-acid chain; its full sequence is ATP synthase epsilon chain (140 aa).

The protein belongs to the ATPase epsilon chain family. F-type ATPases have 2 components, CF(1) - the catalytic core - and CF(0) - the membrane proton channel. CF(1) has five subunits: alpha(3), beta(3), gamma(1), delta(1), epsilon(1). CF(0) has three main subunits: a, b and c.

It is found in the cell inner membrane. In terms of biological role, produces ATP from ADP in the presence of a proton gradient across the membrane. The polypeptide is ATP synthase epsilon chain (Xanthomonas campestris pv. campestris (strain 8004)).